The primary structure comprises 388 residues: Succinate--CoA ligase [ADP-forming] subunit beta (388 aa).

The ATP-grasp domain maps to 9-245; sequence KELLASYGLP…KSQENERELK (237 aa). ATP is bound by residues Lys46, 53–55, Glu100, Tyr103, and Glu108; that span reads GRG. The Mg(2+) site is built by Asn200 and Asp214. Substrate is bound by residues Asn265 and 322–324; that span reads GIV.

This sequence belongs to the succinate/malate CoA ligase beta subunit family. As to quaternary structure, heterotetramer of two alpha and two beta subunits. Requires Mg(2+) as cofactor.

The catalysed reaction is succinate + ATP + CoA = succinyl-CoA + ADP + phosphate. It carries out the reaction GTP + succinate + CoA = succinyl-CoA + GDP + phosphate. It functions in the pathway carbohydrate metabolism; tricarboxylic acid cycle; succinate from succinyl-CoA (ligase route): step 1/1. In terms of biological role, succinyl-CoA synthetase functions in the citric acid cycle (TCA), coupling the hydrolysis of succinyl-CoA to the synthesis of either ATP or GTP and thus represents the only step of substrate-level phosphorylation in the TCA. The beta subunit provides nucleotide specificity of the enzyme and binds the substrate succinate, while the binding sites for coenzyme A and phosphate are found in the alpha subunit. The polypeptide is Succinate--CoA ligase [ADP-forming] subunit beta (Neisseria gonorrhoeae (strain NCCP11945)).